The sequence spans 378 residues: TelA-like protein SAS1347 (378 aa).

Belongs to the TelA family.

In Staphylococcus aureus (strain MSSA476), this protein is TelA-like protein SAS1347.